The sequence spans 185 residues: Large ribosomal subunit protein uL18 (185 aa).

The protein belongs to the universal ribosomal protein uL18 family. In terms of assembly, part of the 50S ribosomal subunit. Contacts the 5S and 23S rRNAs.

Functionally, this is one of the proteins that bind and probably mediate the attachment of the 5S RNA into the large ribosomal subunit, where it forms part of the central protuberance. This is Large ribosomal subunit protein uL18 from Halorubrum lacusprofundi (strain ATCC 49239 / DSM 5036 / JCM 8891 / ACAM 34).